Here is a 72-residue protein sequence, read N- to C-terminus: ATP synthase subunit L (72 aa).

F-type ATP synthases have 2 components, the catalytic core F(1) and the membrane-embedded component F(0), linked together by a central stalk and a peripheral stalk. The central stalk, also called rotor shaft, is often seen as part of F(1). The peripheral stalk is seen as part of F(0). F(0) contains the membrane channel next to the rotor. F-type ATP synthases form dimers but each monomer functions independently in ATP generation. The dimer consists of 18 different polypeptides: ATP1 (subunit alpha, part of F(1), 3 molecules per monomer), ATP2 (subunit beta, part of F(1), 3 molecules per monomer), ATP3 (subunit gamma, part of the central stalk), ATP4 (subunit b, part of the peripheral stalk), ATP5/OSCP (subunit 5/OSCP, part of the peripheral stalk), ATP6 (subunit a, part of the peripheral stalk), ATP7 (subunit d, part of the peripheral stalk), ATP8 (subunit 8, part of the peripheral stalk), OLI1 (subunit c, part of the rotor, 10 molecules per monomer), ATP14 (subunit h, part of the peripheral stalk), ATP15 (subunit epsilon, part of the central stalk), ATP16 (subunit delta, part of the central stalk), ATP17 (subunit f, part of the peripheral stalk), ATP18 (subunit i/j, part of the peripheral stalk). Dimer-specific subunits are ATP19 (subunit k, at interface between monomers), ATP20 (subunit g, at interface between monomers), TIM11 (subunit e, at interface between monomers). Also contains subunit L.

Its subcellular location is the mitochondrion inner membrane. Functionally, mitochondrial membrane ATP synthase (F(1)F(0) ATP synthase or Complex V) produces ATP from ADP in the presence of a proton gradient across the membrane which is generated by electron transport complexes of the respiratory chain. F-type ATP synthases consist of two structural domains, F(1) - containing the extramembraneous catalytic core, and F(0) - containing the membrane proton channel, linked together by a central stalk and a peripheral stalk. During catalysis, ATP synthesis in the catalytic domain of F(1) is coupled via a rotary mechanism of the central stalk subunits to proton translocation. The protein is ATP synthase subunit L of Pichia angusta (Yeast).